A 157-amino-acid polypeptide reads, in one-letter code: Lipoprotein signal peptidase (157 aa).

The next 4 helical transmembrane spans lie at 10 to 30 (LVFI…KHAI), 36 to 56 (YESL…FSLL), 58 to 78 (FLEG…FIFL), and 84 to 104 (LFKN…SNVL). Catalysis depends on residues Asp-114 and Asp-131. Residues 122-142 (FDFAIFNFADVMIDVGVGVLL) traverse the membrane as a helical segment.

It belongs to the peptidase A8 family.

The protein resides in the cell inner membrane. The enzyme catalyses Release of signal peptides from bacterial membrane prolipoproteins. Hydrolyzes -Xaa-Yaa-Zaa-|-(S,diacylglyceryl)Cys-, in which Xaa is hydrophobic (preferably Leu), and Yaa (Ala or Ser) and Zaa (Gly or Ala) have small, neutral side chains.. Its pathway is protein modification; lipoprotein biosynthesis (signal peptide cleavage). Its function is as follows. This protein specifically catalyzes the removal of signal peptides from prolipoproteins. This chain is Lipoprotein signal peptidase, found in Helicobacter pylori (strain P12).